The sequence spans 241 residues: Homeobox protein TGIF2LX (241 aa).

Disordered regions lie at residues 1–58 (MEAA…GNLP) and 126–209 (TGKD…VSPE). The span at 21 to 39 (AKTQSPAQDTSIMSRNNAD) shows a compositional bias: polar residues. The segment at residues 48–111 (EHKKKRKGNL…INARRRILPD (64 aa)) is a DNA-binding region (homeobox; TALE-type).

It belongs to the TALE/TGIF homeobox family.

It is found in the nucleus. Functionally, may have a transcription role in testis. In Gorilla gorilla gorilla (Western lowland gorilla), this protein is Homeobox protein TGIF2LX (TGIF2LX).